The primary structure comprises 282 residues: Kanosamine-6-phosphate phosphatase (282 aa).

The Nucleophile role is filled by Asp25. Mg(2+) contacts are provided by Asp25 and Asp27. Lys209 contributes to the phosphate binding site. Mg(2+) contacts are provided by Asp232 and Ser233. Asn235 lines the phosphate pocket.

The protein belongs to the HAD-like hydrolase superfamily. Cof family. In terms of assembly, homotetramer. Mg(2+) serves as cofactor.

It carries out the reaction D-kanosamine 6-phosphate + H2O = kanosamine + phosphate. The protein operates within antibiotic biosynthesis; kanosamine biosynthesis. In terms of biological role, involved in the biosynthesis of kanosamine (3-amino-3-deoxy-D-glucose), which is known to have antibiotic and antifungal properties, and to be a precursor of the antibiotic neotrehalosadiamine (3,3'-diamino-3,3'-dideoxy-alpha,beta-trehalose (NTD)). Catalyzes the dephosphorylation of kanosamine 6-phosphate to yield kanosamine. There is a trace amount of activity using glucosamine-6-phosphate. The polypeptide is Kanosamine-6-phosphate phosphatase (ntdB) (Bacillus subtilis (strain 168)).